Here is a 183-residue protein sequence, read N- to C-terminus: Apo-citrate lyase phosphoribosyl-dephospho-CoA transferase (183 aa).

This sequence belongs to the CitX family.

It carries out the reaction apo-[citrate lyase ACP] + 2'-(5''-triphospho-alpha-D-ribosyl)-3'-dephospho-CoA = holo-[citrate lyase ACP] + diphosphate. In terms of biological role, transfers 2-(5''-triphosphoribosyl)-3'-dephosphocoenzyme-A on a serine residue to the apo-acyl carrier protein (gamma chain) of the citrate lyase to yield holo-acyl carrier protein. This is Apo-citrate lyase phosphoribosyl-dephospho-CoA transferase from Escherichia coli O139:H28 (strain E24377A / ETEC).